The primary structure comprises 201 residues: 3-isopropylmalate dehydratase small subunit (201 aa).

Belongs to the LeuD family. LeuD type 1 subfamily. As to quaternary structure, heterodimer of LeuC and LeuD.

The enzyme catalyses (2R,3S)-3-isopropylmalate = (2S)-2-isopropylmalate. Its pathway is amino-acid biosynthesis; L-leucine biosynthesis; L-leucine from 3-methyl-2-oxobutanoate: step 2/4. Its function is as follows. Catalyzes the isomerization between 2-isopropylmalate and 3-isopropylmalate, via the formation of 2-isopropylmaleate. This is 3-isopropylmalate dehydratase small subunit from Buchnera aphidicola subsp. Baizongia pistaciae (strain Bp).